A 303-amino-acid chain; its full sequence is Bidirectional sugar transporter SWEET14 (303 aa).

Residues 1–9 lie on the Extracellular side of the membrane; that stretch reads MAGMSLQHP. Residues 10–30 form a helical membrane-spanning segment; that stretch reads WAFAFGLLGNIISFMTYLAPL. The MtN3/slv 1 domain occupies 13 to 98; sequence AFGLLGNIIS…AVYLVYAPKK (86 aa). Topologically, residues 31 to 44 are cytoplasmic; sequence PTFYRIYKSKSTQG. Residues 45-65 traverse the membrane as a helical segment; that stretch reads FQSVPYVVALFSAMLWIYYAL. At 66–72 the chain is on the extracellular side; sequence LKSDECL. Residues 73 to 93 traverse the membrane as a helical segment; the sequence is LITINSAGCVIETIYIAVYLV. Residues 94–105 lie on the Cytoplasmic side of the membrane; sequence YAPKKAKMFTAK. A helical transmembrane segment spans residues 106–126; the sequence is LLLLVNVGVFGLILLLTLLLS. The Extracellular segment spans residues 127 to 133; the sequence is AGDRRIV. The helical transmembrane segment at 134–154 threads the bilayer; the sequence is VLGWVCVGFSVSVFVAPLSII. In terms of domain architecture, MtN3/slv 2 spans 134-217; it reads VLGWVCVGFS…MGLYAMYRNS (84 aa). At 155-167 the chain is on the cytoplasmic side; sequence RLVVRTKSVEFMP. Residues 168-188 form a helical membrane-spanning segment; that stretch reads FSLSFSLTISAVVWFLYGLLI. Over 189–192 the chain is Extracellular; sequence KDKY. A helical transmembrane segment spans residues 193–213; it reads VALPNVLGFSFGVIQMGLYAM. The Cytoplasmic portion of the chain corresponds to 214 to 303; sequence YRNSTPKAVL…AGAGEKKVAA (90 aa). Residues 266-290 form a disordered region; sequence HPVDVESPPAEAPPEEDDKAAAATA.

Belongs to the SWEET sugar transporter family. Forms homooligomers and/or heterooligomers.

The protein localises to the cell membrane. In terms of biological role, mediates both low-affinity uptake and efflux of sugar across the plasma membrane. Functionally, confers blight susceptibility. Confers TAL effector-mediated susceptibility to Xanthomonas oryzae pv. oryzae. This is Bidirectional sugar transporter SWEET14 (SWEET14) from Oryza sativa subsp. japonica (Rice).